A 267-amino-acid chain; its full sequence is Glutamate racemase (267 aa).

Residues 9-10 (DS) and 41-42 (YG) contribute to the substrate site. Catalysis depends on cysteine 72, which acts as the Proton donor/acceptor. Residue 73–74 (NT) participates in substrate binding. Cysteine 184 serves as the catalytic Proton donor/acceptor. A substrate-binding site is contributed by 185 to 186 (TH).

This sequence belongs to the aspartate/glutamate racemases family.

It carries out the reaction L-glutamate = D-glutamate. The protein operates within cell wall biogenesis; peptidoglycan biosynthesis. Its function is as follows. Provides the (R)-glutamate required for cell wall biosynthesis. In Staphylococcus epidermidis (strain ATCC 12228 / FDA PCI 1200), this protein is Glutamate racemase.